The following is a 266-amino-acid chain: Short-chain dehydrogenase/reductase tropE (266 aa).

3 residues coordinate NADP(+): Leu18, Asp69, and Asn96. The active-site Proton donor is Ser147. 3 residues coordinate NADP(+): Tyr181, Lys185, and Thr216. The active-site Proton acceptor is Tyr181. The active-site Lowers pKa of active site Tyr is the Lys185.

The protein belongs to the short-chain dehydrogenases/reductases (SDR) family.

Its pathway is secondary metabolite biosynthesis. Its function is as follows. Short-chain dehydrogenase/reductase; part of the gene cluster that mediates the biosynthesis of the tropolone class of fungal maleic anhydrides. The pathway begins with the synthesis of 3-methylorcinaldehyde by the non-reducing polyketide synthase (PKS) tropA. 3-methylorcinaldehyde is the substrate for the FAD-dependent monooxygenase tropB to yield a dearomatized hydroxycyclohexadione. The 2-oxoglutarate-dependent dioxygenase tropC then performs the oxidative ring expansion to provide the first tropolone metabolite stipitaldehyde. Trop D converts stipitaldehyde into stipitacetal which is in turn converted to stipitalide by the short-chain dehydrogenase/reductase tropE. The next steps involve tropF, tropG, tropH, tropI and tropJ to form successive tropolone maleic anhydrides including stipitaldehydic, stipitatonic and stipitatic acids. This is Short-chain dehydrogenase/reductase tropE from Talaromyces stipitatus (strain ATCC 10500 / CBS 375.48 / QM 6759 / NRRL 1006) (Penicillium stipitatum).